The following is a 196-amino-acid chain: Chloroplastic ATP-dependent Clp protease proteolytic subunit 1 (196 aa).

Serine 101 serves as the catalytic Nucleophile. Histidine 126 is a catalytic residue.

Belongs to the peptidase S14 family. In terms of assembly, component of the chloroplastic Clp protease core complex which consist of at least 16 proteins: CLPP4 (3 copies), CLPP5 (3 copies), CLPR4 (2 copies), ClpP1 (1 copy), CLPP6 (1 copy), CLPR2 (1 copy), CLPT1 (1 copy), CLPT2 (1 copy) and 3 copies of CLPP3 and/or CLPR1 and/or CLPR3. The core complex is organized in two heptameric rings, one containing CLPP3,4,5,6 in a 1:2:3:1 ratio and the other CLPP1 and CLPR1,2,3,4 in a 3:1:1:1:1 ratio. Mostly expressed in leaves. Also detected in stems, and to a lower extent, in roots (at protein level).

The protein resides in the plastid. It localises to the chloroplast stroma. The catalysed reaction is Hydrolysis of proteins to small peptides in the presence of ATP and magnesium. alpha-casein is the usual test substrate. In the absence of ATP, only oligopeptides shorter than five residues are hydrolyzed (such as succinyl-Leu-Tyr-|-NHMec, and Leu-Tyr-Leu-|-Tyr-Trp, in which cleavage of the -Tyr-|-Leu- and -Tyr-|-Trp bonds also occurs).. Its function is as follows. Cleaves peptides in various proteins in a process that requires ATP hydrolysis. Has a chymotrypsin-like activity. Plays a major role in the degradation of misfolded proteins. This chain is Chloroplastic ATP-dependent Clp protease proteolytic subunit 1, found in Arabidopsis thaliana (Mouse-ear cress).